The primary structure comprises 349 residues: Flap endonuclease 1 (349 aa).

Residues 1–98 are N-domain; the sequence is MDLADLVKDV…EELERRRKAK (98 aa). Residues Asp27, Asp80, Glu152, Glu154, Asp173, Asp175, and Asp236 each contribute to the Mg(2+) site. The segment at 116 to 258 is I-domain; sequence ELRKYSQAIL…RALKIIKKYG (143 aa). The tract at residues 341–349 is interaction with PCNA; that stretch reads RQTGLDRWF.

This sequence belongs to the XPG/RAD2 endonuclease family. FEN1 subfamily. Interacts with PCNA via subunit PCNA1. Requires Mg(2+) as cofactor.

Heterotrimeric PCNA stimulates the nuclease activity without altering cleavage specificity. In terms of biological role, structure-specific nuclease with 5'-flap endonuclease and 5'-3' exonuclease activities involved in DNA replication and repair. During DNA replication, cleaves the 5'-overhanging flap structure that is generated by displacement synthesis when DNA polymerase encounters the 5'-end of a downstream Okazaki fragment. Binds the unpaired 3'-DNA end and kinks the DNA to facilitate 5' cleavage specificity. Cleaves one nucleotide into the double-stranded DNA from the junction in flap DNA, leaving a nick for ligation. Also involved in the base excision repair (BER) pathway. Acts as a genome stabilization factor that prevents flaps from equilibrating into structures that lead to duplications and deletions. Also possesses 5'-3' exonuclease activity on nicked or gapped double-stranded DNA. DNA polymerase I, DNA ligase and the flap endonuclease may be constitutively associated with the PCNA heterotrimer forming a scanning complex able to couple DNA synthesis and Okazaki fragment maturation. This chain is Flap endonuclease 1, found in Saccharolobus solfataricus (strain ATCC 35092 / DSM 1617 / JCM 11322 / P2) (Sulfolobus solfataricus).